Here is a 145-residue protein sequence, read N- to C-terminus: D-aminoacyl-tRNA deacylase (145 aa).

The Gly-cisPro motif, important for rejection of L-amino acids signature appears at 137 to 138 (GP).

The protein belongs to the DTD family. Homodimer.

The protein localises to the cytoplasm. The catalysed reaction is glycyl-tRNA(Ala) + H2O = tRNA(Ala) + glycine + H(+). It carries out the reaction a D-aminoacyl-tRNA + H2O = a tRNA + a D-alpha-amino acid + H(+). Functionally, an aminoacyl-tRNA editing enzyme that deacylates mischarged D-aminoacyl-tRNAs. Also deacylates mischarged glycyl-tRNA(Ala), protecting cells against glycine mischarging by AlaRS. Acts via tRNA-based rather than protein-based catalysis; rejects L-amino acids rather than detecting D-amino acids in the active site. By recycling D-aminoacyl-tRNA to D-amino acids and free tRNA molecules, this enzyme counteracts the toxicity associated with the formation of D-aminoacyl-tRNA entities in vivo and helps enforce protein L-homochirality. In Erwinia tasmaniensis (strain DSM 17950 / CFBP 7177 / CIP 109463 / NCPPB 4357 / Et1/99), this protein is D-aminoacyl-tRNA deacylase.